We begin with the raw amino-acid sequence, 197 residues long: Small ribosomal subunit protein uS7 (197 aa).

This sequence belongs to the universal ribosomal protein uS7 family. Part of the 30S ribosomal subunit.

Functionally, one of the primary rRNA binding proteins, it binds directly to 16S rRNA where it nucleates assembly of the head domain of the 30S subunit. Is located at the subunit interface close to the decoding center. This Methanopyrus kandleri (strain AV19 / DSM 6324 / JCM 9639 / NBRC 100938) protein is Small ribosomal subunit protein uS7.